Here is a 194-residue protein sequence, read N- to C-terminus: CASP-like protein 1D1 (194 aa).

Residues 1–16 are compositionally biased toward basic and acidic residues; that stretch reads MGSDETKSTLDTERST. Residues 1–23 are disordered; sequence MGSDETKSTLDTERSTVPRTGTT. The Cytoplasmic portion of the chain corresponds to 1–31; the sequence is MGSDETKSTLDTERSTVPRTGTTTKSCSITQ. Residues 32-52 form a helical membrane-spanning segment; that stretch reads VVLRFVLFAATLTSIVVMVTS. The Extracellular segment spans residues 53-77; sequence KQTKNIFIPGTPIRIPAAKFTNSPA. Residues 78-98 traverse the membrane as a helical segment; it reads LIYFVVALSVACFYSIVSTFV. Residues 99–109 lie on the Cytoplasmic side of the membrane; sequence TVSAFKKHSCS. Residues 110–130 form a helical membrane-spanning segment; sequence AILLLNLAIMDAVMVGIVASA. At 131–163 the chain is on the extracellular side; that stretch reads TGAGGGVAYLGLKGNKEVRWGKICNIYDKFCRH. The chain crosses the membrane as a helical span at residues 164–184; that stretch reads VGGAIAVSLFASVILLLLSII. The Cytoplasmic portion of the chain corresponds to 185–194; it reads SVLSLYKKIR.

This sequence belongs to the Casparian strip membrane proteins (CASP) family. In terms of assembly, homodimer and heterodimers.

The protein localises to the cell membrane. In Arabidopsis lyrata subsp. lyrata (Lyre-leaved rock-cress), this protein is CASP-like protein 1D1.